We begin with the raw amino-acid sequence, 285 residues long: Phospholipid phosphatase 1 (285 aa).

The Cytoplasmic segment spans residues 1–6 (MFDKAR). The PDZ-binding; involved in localization to the apical cell membrane motif lies at 5-7 (ARL). The helical transmembrane segment at 7 to 27 (LPYVALDVLCVVLAGLPFAIL) threads the bilayer. At 28-53 (TSRHTPFQRGIFCNDESIKYPYKEDT) the chain is on the extracellular side. A helical transmembrane segment spans residues 54-74 (IPYALLGGIMIPFSIVVMIIG). Residues 75–94 (ETLSVYCNLLHSNSFIRNNY) are Cytoplasmic-facing. Residues 95–115 (IATIYKSIGTFLFGAAASQSL) traverse the membrane as a helical segment. Over 116–165 (TDIAKYSIGRLRPHFLSVCDPDWSKVNCSDGYIEYYVCRGNAEKVKEGRL) the chain is Extracellular. Residues 120–128 (KYSIGRLRP) form a phosphatase sequence motif I region. N-linked (GlcNAc...) asparagine glycosylation occurs at Asn142. The helical transmembrane segment at 166 to 186 (SFYSGHSSFSMYCMVFVALYL) threads the bilayer. Residues 168–171 (YSGH) form a phosphatase sequence motif II region. His171 acts as the Proton donors in catalysis. At 187–199 (QARMKGDWARLLR) the chain is on the cytoplasmic side. A helical transmembrane segment spans residues 200 to 220 (PTLQFGLVAASIYVGLSRISD). A phosphatase sequence motif III region spans residues 216–227 (SRISDYKHHWSD). Topologically, residues 221 to 229 (YKHHWSDVL) are extracellular. The Nucleophile role is filled by His223. A helical membrane pass occupies residues 230–250 (TGLIQGAIVAILVAVYVSDFF). The Cytoplasmic portion of the chain corresponds to 251 to 285 (KARNSPFQERKEEDSHTTLHETPTAGNHYRSNHQP). Positions 260–269 (RKEEDSHTTL) are enriched in basic and acidic residues. A disordered region spans residues 260–285 (RKEEDSHTTLHETPTAGNHYRSNHQP).

It belongs to the PA-phosphatase related phosphoesterase family. Forms functional homodimers and homooligomers that are not required for substrate recognition and catalytic activity. Can also form heterooligomers with PLPP2 and PLPP3. In terms of processing, N-glycosylated. N-linked sugars are of the complex type. N-glycosylation is not required for the phosphatase activity.

It localises to the cell membrane. Its subcellular location is the apical cell membrane. The protein localises to the membrane raft. The protein resides in the membrane. It is found in the caveola. The catalysed reaction is a 1,2-diacyl-sn-glycero-3-phosphate + H2O = a 1,2-diacyl-sn-glycerol + phosphate. It catalyses the reaction 1,2-dihexadecanoyl-sn-glycero-3-phosphate + H2O = 1,2-dihexadecanoyl-sn-glycerol + phosphate. It carries out the reaction 1,2-di-(9Z-octadecenoyl)-sn-glycero-3-phosphate + H2O = 1,2-di-(9Z-octadecenoyl)-sn-glycerol + phosphate. The enzyme catalyses a monoacyl-sn-glycero-3-phosphate + H2O = a monoacylglycerol + phosphate. The catalysed reaction is (9Z)-octadecenoyl-sn-glycero-3-phosphate + H2O = (9Z-octadecenoyl)-glycerol + phosphate. It catalyses the reaction a 1-acyl-sn-glycero-3-phosphate + H2O = a 1-acyl-sn-glycerol + phosphate. It carries out the reaction 1-(9Z-octadecenoyl)-sn-glycero-3-phosphate + H2O = 1-(9Z-octadecenoyl)-sn-glycerol + phosphate. The enzyme catalyses a 1,2-diacyl-sn-glycerol 3-diphosphate + H2O = a 1,2-diacyl-sn-glycero-3-phosphate + phosphate + H(+). The catalysed reaction is sphing-4-enine 1-phosphate + H2O = sphing-4-enine + phosphate. It catalyses the reaction an N-acylsphing-4-enine 1-phosphate + H2O = an N-acylsphing-4-enine + phosphate. It carries out the reaction N-(octanoyl)-sphing-4-enine-1-phosphate + H2O = N-octanoylsphing-4-enine + phosphate. The enzyme catalyses N-(9Z-octadecenoyl)-ethanolamine phosphate + H2O = N-(9Z-octadecenoyl) ethanolamine + phosphate. The catalysed reaction is 1-hexadecanoyl-2-(9Z-octadecenoyl)-sn-glycero-3-phosphate + H2O = 1-hexadecanoyl-2-(9Z-octadecenoyl)-sn-glycerol + phosphate. Its pathway is lipid metabolism; phospholipid metabolism. Its activity is regulated as follows. Magnesium-independent phospholipid phosphatase. Insensitive to N-ethylmaleimide. Its function is as follows. Magnesium-independent phospholipid phosphatase of the plasma membrane that catalyzes the dephosphorylation of a variety of glycerolipid and sphingolipid phosphate esters including phosphatidate/PA, lysophosphatidate/LPA, diacylglycerol pyrophosphate/DGPP, sphingosine 1-phosphate/S1P and ceramide 1-phosphate/C1P. Also acts on N-oleoyl ethanolamine phosphate/N-(9Z-octadecenoyl)-ethanolamine phosphate, a potential physiological compound. Through its extracellular phosphatase activity allows both the hydrolysis and the cellular uptake of these bioactive lipid mediators from the milieu, regulating signal transduction in different cellular processes. It is for instance essential for the extracellular hydrolysis of S1P and subsequent conversion into intracellular S1P. Involved in the regulation of inflammation, platelets activation, cell proliferation and migration among other processes. May also have an intracellular activity to regulate phospholipid-mediated signaling pathways. The chain is Phospholipid phosphatase 1 from Cavia porcellus (Guinea pig).